The chain runs to 277 residues: Undecaprenyl-diphosphatase (277 aa).

7 helical membrane passes run 5 to 25 (WTAA…FLPI), 44 to 64 (RAMA…VWEF), 86 to 106 (LNLL…ADTI), 110 to 130 (LFNA…MLWA), 184 to 204 (AATE…AVYS), 219 to 239 (VFAI…RALL), and 255 to 275 (IAFG…WASA).

It belongs to the UppP family.

The protein resides in the cell inner membrane. The catalysed reaction is di-trans,octa-cis-undecaprenyl diphosphate + H2O = di-trans,octa-cis-undecaprenyl phosphate + phosphate + H(+). Functionally, catalyzes the dephosphorylation of undecaprenyl diphosphate (UPP). Confers resistance to bacitracin. The chain is Undecaprenyl-diphosphatase from Pseudomonas savastanoi pv. phaseolicola (strain 1448A / Race 6) (Pseudomonas syringae pv. phaseolicola (strain 1448A / Race 6)).